Consider the following 289-residue polypeptide: Bidirectional sugar transporter SWEET11 (289 aa).

The Extracellular segment spans residues 1-9; that stretch reads MSLFNTENT. The chain crosses the membrane as a helical span at residues 10-30; sequence WAFVFGLLGNLISFAVFLSPV. Residues 12-98 enclose the MtN3/slv 1 domain; it reads FVFGLLGNLI…SMFLAYAPKP (87 aa). At 31–43 the chain is on the cytoplasmic side; that stretch reads PTFYRIWKKKTTE. The chain crosses the membrane as a helical span at residues 44–64; sequence GFQSIPYVVALFSATLWLYYA. Over 65 to 70 the chain is Extracellular; that stretch reads TQKKDV. Residues 71-91 traverse the membrane as a helical segment; that stretch reads FLLVTINAFGCFIETIYISMF. At 92–105 the chain is on the cytoplasmic side; sequence LAYAPKPARMLTVK. Residues 106-126 traverse the membrane as a helical segment; that stretch reads MLLLMNFGGFCAILLLCQFLV. Residues 127–133 lie on the Extracellular side of the membrane; the sequence is KGATRAK. A helical transmembrane segment spans residues 134–154; that stretch reads IIGGICVGFSVCVFAAPLSII. The 85-residue stretch at 134-218 folds into the MtN3/slv 2 domain; sequence IIGGICVGFS…ILYVVYKYCK (85 aa). Topologically, residues 155 to 167 are cytoplasmic; sequence RTVIKTRSVEYMP. A helical transmembrane segment spans residues 168-188; that stretch reads FSLSLTLTISAVIWLLYGLAL. Over 189 to 192 the chain is Extracellular; that stretch reads KDIY. The chain crosses the membrane as a helical span at residues 193 to 213; sequence VAFPNVLGFALGALQMILYVV. The Cytoplasmic portion of the chain corresponds to 214-289; the sequence is YKYCKTSPHL…GKQSSSAAAT (76 aa). Positions 266-289 are disordered; sequence DRRAEIEDGQTPKHGKQSSSAAAT. Threonine 276 carries the phosphothreonine modification.

The protein belongs to the SWEET sugar transporter family. Forms homooligomers and heterooligomers with SWEET1, SWEET3, SWEET5, SWEET6, SWEET7, SWEET8, SWEET9, SWEET12, SWEET13, SWEET15 and SWEET17. Expressed in leaves, especially in phloem. Expressed in developing seeds.

The protein resides in the cell membrane. Its function is as follows. Mediates both low-affinity uptake and efflux of sugar across the plasma membrane. Involved in phloem loading by mediating export from parenchyma cells feeding H(+)-coupled import into the sieve element/companion cell complex, thus contributing to the sucrose migration from sites of synthesis in the mesophyll to the phloem. Contributes to seed filling by triggering sucrose efflux involved in the transfer of sugars from seed coat to embryos. This Arabidopsis thaliana (Mouse-ear cress) protein is Bidirectional sugar transporter SWEET11.